A 414-amino-acid polypeptide reads, in one-letter code: MALVLHTYKGNKSAEKALIAAEYVGVQIDVPSDFQMGVTNKTPAFLKMNPIGKVPVLETPEGSVFESNAIARYVSRLNGDNSLNGSSLIEYAQIEQWIDFSSLEIYASILRWFGPRMGFMPYSAPAEEGAISTLKRALDALNTHLTSNTYLVGHSITLADIITVCNLNLGFATVMTKKFTSEFPHVERYFWTVVNQPNFTKVLGDVKQTEAVPPIASKKAAQPAKPKEEPKKKEAPVAEAPKLAEEEEAPKPKAKNPLDLLPPSPMVLDDWKRLYSNTKSNFREVAIKGFWDMYDPEGYSLWFCDYKYNDENMVSFVTLNKVGGFLQRMDLARKYSFGKMLICGSEGPFKVKGLWLFRGPEIPKFIMDEVYDMELYEWTKVDISDEAQKERVSQMIEDAEPFEGEALLDAKCFK.

The region spanning 1–82 (MALVLHTYKG…YVSRLNGDNS (82 aa)) is the GST N-terminal domain. Positions 87-215 (SLIEYAQIEQ…VKQTEAVPPI (129 aa)) constitute a GST C-terminal domain. The span at 214–224 (PIASKKAAQPA) shows a compositional bias: low complexity. The tract at residues 214–260 (PIASKKAAQPAKPKEEPKKKEAPVAEAPKLAEEEEAPKPKAKNPLDL) is disordered. The segment covering 225–236 (KPKEEPKKKEAP) has biased composition (basic and acidic residues). The EF-1-gamma C-terminal domain occupies 254–414 (AKNPLDLLPP…EALLDAKCFK (161 aa)).

As to quaternary structure, EF-1 is composed of four subunits: alpha, beta, delta, and gamma.

Functionally, probably plays a role in anchoring the complex to other cellular components. In Arabidopsis thaliana (Mouse-ear cress), this protein is Probable elongation factor 1-gamma 1.